A 135-amino-acid polypeptide reads, in one-letter code: Transcription antitermination protein NusB (135 aa).

The interval 115-135 is disordered; it reads ATPAESTGRGSAVDSIPGQPS.

Belongs to the NusB family.

Functionally, involved in transcription antitermination. Required for transcription of ribosomal RNA (rRNA) genes. Binds specifically to the boxA antiterminator sequence of the ribosomal RNA (rrn) operons. The sequence is that of Transcription antitermination protein NusB from Frankia casuarinae (strain DSM 45818 / CECT 9043 / HFP020203 / CcI3).